The sequence spans 221 residues: Superoxide dismutase [Mn] 1, mitochondrial (221 aa).

A mitochondrion-targeting transit peptide spans 1-24 (MLQNTVRCVSKLVQPITGVAAVRS). Residues His50, His98, Asp182, and His186 each contribute to the Mn(2+) site.

The protein belongs to the iron/manganese superoxide dismutase family. As to quaternary structure, homotetramer. Requires Mn(2+) as cofactor.

It localises to the mitochondrion matrix. It carries out the reaction 2 superoxide + 2 H(+) = H2O2 + O2. In terms of biological role, destroys superoxide anion radicals which are normally produced within the cells and which are toxic to biological systems. This Caenorhabditis elegans protein is Superoxide dismutase [Mn] 1, mitochondrial (sod-2).